The primary structure comprises 31 residues: Bacteriocin leucocin-B (31 aa).

It is found in the secreted. Its function is as follows. Inhibits a wide spectrum of lactic acid bacteria. This is Bacteriocin leucocin-B from Leuconostoc mesenteroides.